The sequence spans 205 residues: Probable GTP-binding protein EngB (205 aa).

The EngB-type G domain maps to 29 to 203; it reads QGAEIAFIGR…KAVLSQWFRS (175 aa). GTP is bound by residues 37-44, 64-68, 82-85, 149-152, and 182-184; these read GRSNAGKS, GRTQM, DLPG, TKSD, and FSS. Mg(2+)-binding residues include Ser-44 and Thr-66.

This sequence belongs to the TRAFAC class TrmE-Era-EngA-EngB-Septin-like GTPase superfamily. EngB GTPase family. Mg(2+) serves as cofactor.

In terms of biological role, necessary for normal cell division and for the maintenance of normal septation. In Coxiella burnetii (strain CbuG_Q212) (Coxiella burnetii (strain Q212)), this protein is Probable GTP-binding protein EngB.